The sequence spans 672 residues: Inner kinetochore subunit mis6 (672 aa).

Belongs to the CENP-I/CTF3 family. As to quaternary structure, component of the inner kinetochore constitutive centromere-associated network (CCAN) (also known as central kinetochore Sim4 complex in fission yeast), which is composed of at least cnl2, cnp3, cnp20, fta1, fta2, fta3, fta4, fta6, fta7, mal2, mhf1, mhf2, mis6, mis15, mis17, sim4 and wip1. Interacts with cnp1, sim4, mis15 and mis17.

The protein localises to the nucleus. It localises to the chromosome. It is found in the centromere. Component of the kinetochore, a multiprotein complex that assembles on centromeric DNA and attaches chromosomes to spindle microtubules, mediating chromosome segregation and sister chromatid segregation during meiosis and mitosis. Component of the inner kinetochore constitutive centromere-associated network (CCAN), which serves as a structural platform for outer kinetochore assembly. Required for the localization of cnp1 to the centromere. The protein is Inner kinetochore subunit mis6 (mis6) of Schizosaccharomyces pombe (strain 972 / ATCC 24843) (Fission yeast).